A 92-amino-acid chain; its full sequence is MSTRRQAITLYRNLLRESEKLPAYNFRMYAVRKIRDAFRANKAIRDFAEIDRQMEAGKQNLELIRRQVIIGHLYTADKLVIENKKTLSPLDD.

Positions 40 to 68 form a coiled coil; sequence ANKAIRDFAEIDRQMEAGKQNLELIRRQV.

Belongs to the complex I LYR family. In terms of assembly, component of the mitochondrial core iron-sulfur cluster (ISC) assembly complex at least composed of the cysteine desulfurase Nfs1, the scaffold protein IscU, the accessory protein bcn92/Isd11/Lyrm4, and probably fh/frataxin. Interacts with Nfs1.

The protein localises to the mitochondrion. Stabilizing factor of the core iron-sulfur cluster (ISC) assembly complex that regulates the stability and cysteine desulfurase activity of Nfs1 and participates in the [2Fe-2S] clusters assembly on the scaffolding protein IscU. The polypeptide is LYR motif-containing protein 4 homolog (Drosophila subobscura (Fruit fly)).